Reading from the N-terminus, the 1129-residue chain is Translation initiation factor IF-2 (1129 aa).

2 stretches are compositionally biased toward low complexity: residues A33–S42 and G56–P99. Disordered regions lie at residues A33–N462 and S485–R515. The span at S100–P112 shows a compositional bias: pro residues. Low complexity predominate over residues S135–S147. Pro residues predominate over residues A148–T161. Residues A162–P175 show a composition bias toward low complexity. 2 stretches are compositionally biased toward pro residues: residues S176–A191 and P211–K221. The segment covering G257 to R273 has biased composition (low complexity). A compositionally biased stretch (basic and acidic residues) spans G431 to R445. Composition is skewed to basic residues over residues S490–A499 and I506–R515. Residues R621 to L793 enclose the tr-type G domain. Positions G630–T637 are G1. A GTP-binding site is contributed by G630 to T637. A G2 region spans residues G655–H659. The interval D680–G683 is G3. GTP-binding positions include D680–H684 and N734–D737. A G4 region spans residues N734–D737. Positions S770–L772 are G5.

This sequence belongs to the TRAFAC class translation factor GTPase superfamily. Classic translation factor GTPase family. IF-2 subfamily.

The protein resides in the cytoplasm. In terms of biological role, one of the essential components for the initiation of protein synthesis. Protects formylmethionyl-tRNA from spontaneous hydrolysis and promotes its binding to the 30S ribosomal subunits. Also involved in the hydrolysis of GTP during the formation of the 70S ribosomal complex. The protein is Translation initiation factor IF-2 of Synechococcus sp. (strain CC9311).